Reading from the N-terminus, the 152-residue chain is UPF0266 membrane protein KPN78578_23010 (152 aa).

A run of 3 helical transmembrane segments spans residues Leu-6–Met-26, Val-45–His-65, and Thr-67–Ile-87.

This sequence belongs to the UPF0266 family.

It localises to the cell inner membrane. This is UPF0266 membrane protein KPN78578_23010 from Klebsiella pneumoniae subsp. pneumoniae (strain ATCC 700721 / MGH 78578).